Reading from the N-terminus, the 62-residue chain is MRLLFLLFILLVCLAQTTSGRKRNSKFRPCEKMGGICKSQKTHGCSILPAECKSRYKHCCRL.

The N-terminal stretch at 1–20 is a signal peptide; it reads MRLLFLLFILLVCLAQTTSG. Disulfide bonds link Cys30-Cys59, Cys37-Cys52, and Cys45-Cys60.

Belongs to the beta-defensin family.

It localises to the secreted. Has antibacterial activity. This chain is Beta-defensin 33 (Defb33), found in Mus musculus (Mouse).